We begin with the raw amino-acid sequence, 96 residues long: Probable Fe(2+)-trafficking protein (96 aa).

Positions 21–40 are disordered; that stretch reads LPKMPHPPFPNKKGQELQET.

The protein belongs to the Fe(2+)-trafficking protein family.

Functionally, could be a mediator in iron transactions between iron acquisition and iron-requiring processes, such as synthesis and/or repair of Fe-S clusters in biosynthetic enzymes. In Psychrobacter arcticus (strain DSM 17307 / VKM B-2377 / 273-4), this protein is Probable Fe(2+)-trafficking protein.